Here is a 247-residue protein sequence, read N- to C-terminus: 1-(5-phosphoribosyl)-5-[(5-phosphoribosylamino)methylideneamino] imidazole-4-carboxamide isomerase 1 (247 aa).

Catalysis depends on Glu8, which acts as the Proton acceptor. Asp128 serves as the catalytic Proton donor.

It belongs to the HisA/HisF family.

It is found in the cytoplasm. The enzyme catalyses 1-(5-phospho-beta-D-ribosyl)-5-[(5-phospho-beta-D-ribosylamino)methylideneamino]imidazole-4-carboxamide = 5-[(5-phospho-1-deoxy-D-ribulos-1-ylimino)methylamino]-1-(5-phospho-beta-D-ribosyl)imidazole-4-carboxamide. It participates in amino-acid biosynthesis; L-histidine biosynthesis; L-histidine from 5-phospho-alpha-D-ribose 1-diphosphate: step 4/9. This chain is 1-(5-phosphoribosyl)-5-[(5-phosphoribosylamino)methylideneamino] imidazole-4-carboxamide isomerase 1, found in Ruegeria sp. (strain TM1040) (Silicibacter sp.).